Reading from the N-terminus, the 421-residue chain is Subtilisin-like protease 2 (421 aa).

The N-terminal stretch at 1–16 is a signal peptide; that stretch reads MQLLNFGLLLLPFVAG. Positions 17–122 are excised as a propeptide; it reads DLAPQPEPLL…VHPDQHVYLA (106 aa). The region spanning 36–122 is the Inhibitor I9 domain; that stretch reads QYIVTLKEGL…VHPDQHVYLA (87 aa). Positions 131–421 constitute a Peptidase S8 domain; sequence RWGLGYMSSK…ERKFTLPKYY (291 aa). Catalysis depends on charge relay system residues Asp-169 and His-201. 3 N-linked (GlcNAc...) asparagine glycosylation sites follow: Asn-248, Asn-261, and Asn-348. Ser-357 serves as the catalytic Charge relay system. N-linked (GlcNAc...) asparagine glycosylation occurs at Asn-388.

It belongs to the peptidase S8 family.

The protein resides in the secreted. Its function is as follows. Secreted subtilisin-like serine protease with keratinolytic activity that contributes to pathogenicity. The chain is Subtilisin-like protease 2 (SUB2) from Arthroderma benhamiae (strain ATCC MYA-4681 / CBS 112371) (Trichophyton mentagrophytes).